The primary structure comprises 159 residues: Putative ribosomal RNA large subunit methyltransferase H (159 aa).

Residues leucine 76, glycine 108, and 127–132 (FSKMTF) contribute to the S-adenosyl-L-methionine site.

It belongs to the RNA methyltransferase RlmH family.

The protein localises to the cytoplasm. It catalyses the reaction pseudouridine(1915) in 23S rRNA + S-adenosyl-L-methionine = N(3)-methylpseudouridine(1915) in 23S rRNA + S-adenosyl-L-homocysteine + H(+). In terms of biological role, specifically methylates the pseudouridine at position 1915 (m3Psi1915) in 23S rRNA. This Methanococcus maripaludis (strain C5 / ATCC BAA-1333) protein is Putative ribosomal RNA large subunit methyltransferase H.